A 323-amino-acid chain; its full sequence is L-lactate dehydrogenase 1 (323 aa).

Residues V18, D39, Y69, and 83 to 84 (GA) each bind NAD(+). Residues Q86 and R92 each contribute to the substrate site. NAD(+) is bound by residues S105, 122–124 (VAN), and S147. 124 to 127 (NPVD) provides a ligand contact to substrate. 152 to 155 (DTGR) contacts substrate. H179 acts as the Proton acceptor in catalysis. The residue at position 223 (Y223) is a Phosphotyrosine. Residue T232 coordinates substrate.

It belongs to the LDH/MDH superfamily. LDH family. Homotetramer.

It is found in the cytoplasm. It catalyses the reaction (S)-lactate + NAD(+) = pyruvate + NADH + H(+). It participates in fermentation; pyruvate fermentation to lactate; (S)-lactate from pyruvate: step 1/1. Catalyzes the conversion of lactate to pyruvate. This Lactobacillus acidophilus (strain ATCC 700396 / NCK56 / N2 / NCFM) protein is L-lactate dehydrogenase 1.